Here is a 123-residue protein sequence, read N- to C-terminus: MGSKGGFILLWLLSILAVLCHLGHSLQCYNCINPAGSCTTAMNCSHNQDACIFVEAVPPKTYYQCWRFDECNFDFISRNLAEKKLKYNCCRKDLCNKSDATISSGKTALLVILLLVATWHFCL.

Positions 1–25 (MGSKGGFILLWLLSILAVLCHLGHS) are cleaved as a signal peptide. One can recognise a UPAR/Ly6 domain in the interval 26-103 (LQCYNCINPA…LCNKSDATIS (78 aa)). 5 disulfide bridges follow: Cys-28-Cys-51, Cys-31-Cys-38, Cys-44-Cys-65, Cys-71-Cys-89, and Cys-90-Cys-95. Residue Asn-43 is glycosylated (N-linked (GlcNAc...) asparagine). Ser-98 is lipidated: GPI-anchor amidated serine. Positions 99–123 (DATISSGKTALLVILLLVATWHFCL) are cleaved as a propeptide — removed in mature form.

In terms of assembly, interacts with T-cell surface antigen CD2. In terms of processing, N- and O-glycosylated. In terms of tissue distribution, expressed in all tissues tested (lung, testis liver, kidney, spleen, heart and skeletal muscle). Highest levels in lung and spleen, lowest levels in liver and skeletal muscle.

It is found in the cell membrane. It localises to the secreted. Functionally, potent inhibitor of the complement membrane attack complex (MAC) action, which protects self-cells from damage during complement activation. Acts by binding to the beta-haipins of C8 (C8A and C8B) components of the assembling MAC, forming an intermolecular beta-sheet that prevents incorporation of the multiple copies of C9 required for complete formation of the osmolytic pore. The chain is CD59 glycoprotein from Sus scrofa (Pig).